A 222-amino-acid polypeptide reads, in one-letter code: Octanoyltransferase (222 aa).

The region spanning 34–214 (GEKNSTVLIL…EFSKHDEALV (181 aa)) is the BPL/LPL catalytic domain. Substrate contacts are provided by residues 72 to 79 (RGGKLTWH), 144 to 146 (AIG), and 157 to 159 (GVA). Cysteine 175 acts as the Acyl-thioester intermediate in catalysis.

This sequence belongs to the LipB family.

It is found in the cytoplasm. It catalyses the reaction octanoyl-[ACP] + L-lysyl-[protein] = N(6)-octanoyl-L-lysyl-[protein] + holo-[ACP] + H(+). It participates in protein modification; protein lipoylation via endogenous pathway; protein N(6)-(lipoyl)lysine from octanoyl-[acyl-carrier-protein]: step 1/2. In terms of biological role, catalyzes the transfer of endogenously produced octanoic acid from octanoyl-acyl-carrier-protein onto the lipoyl domains of lipoate-dependent enzymes. Lipoyl-ACP can also act as a substrate although octanoyl-ACP is likely to be the physiological substrate. The chain is Octanoyltransferase from Paenarthrobacter aurescens (strain TC1).